Here is a 694-residue protein sequence, read N- to C-terminus: Nuclear factor erythroid 2-related factor 3 (694 aa).

The span at 133–150 (ASSTGGAGASVDGGSQAV) shows a compositional bias: low complexity. Disordered stretches follow at residues 133 to 256 (ASST…LNGT) and 330 to 357 (DPTA…QTLP). Composition is skewed to basic and acidic residues over residues 193–217 (GVLR…RVSA) and 231–254 (NKIA…RHLN). Residues 333–357 (ARTSQSQEPFLQLNSHTTNPEQTLP) show a composition bias toward polar residues. Residues 578–641 (LIRDIRRRGK…NIMKQKLHDL (64 aa)) form the bZIP domain. Residues 580-599 (RDIRRRGKNKVAAQNCRKRK) are basic motif. The tract at residues 606–620 (LEDDVCNLQAKKETL) is leucine-zipper.

This sequence belongs to the bZIP family. CNC subfamily. As to quaternary structure, heterodimer with MAFG, MAFK and other small MAF proteins that binds to the MAF recognition elements (MARE). As to expression, highly expressed in human placenta and also in B-cell and monocyte cell lines. Low expression in heart, brain, lung, skeletal muscle, kidney and pancreas.

Its subcellular location is the nucleus. In terms of biological role, activates erythroid-specific, globin gene expression. The protein is Nuclear factor erythroid 2-related factor 3 (NFE2L3) of Homo sapiens (Human).